The following is a 234-amino-acid chain: MFKTFIIAAVAVATVRAAVIGHDQVVPFAQPTPTSISQTTAVNFKPQLHITNGCHPYPAVDADGNTSGGLNPTGSSSAGCKGSGYGSQIYGRSAWYNGVWAIMYSWYFPKDSPSSGFGHRHDWEHIVVWLDNPAVASPKILAVSTSAHSGYTVYYPPNSNYLNGKSAKIDYYSILLINHAFRMTSDAGETQNLIMWDQMTDAARTALQNTDFGDANVPFKDGNFESKLANAWYQ.

A signal peptide spans 1-17 (MFKTFIIAAVAVATVRA). Asn65 carries an N-linked (GlcNAc...) asparagine glycan. Positions 101 to 111 (AIMYSWYFPKD) match the Conserved undecapeptide motif I motif. A Hepta-peptide GHRHDWE motif II motif is present at residues 118–124 (GHRHDWE).

This sequence belongs to the Necrosis inducing protein (NPP1) family.

Its subcellular location is the secreted. In terms of biological role, secreted effector that contributes moderately to virulence during infection by P.capsici. Does not cause visible reaction of C.annuum for several days after inoculation, but by 7 days after inoculation, small necrotic lesions become visible. Leads only to chlorotic areas, without necrosis at 7 days after non-host N.benthamiana leaves infection. The protein is NLP effector protein 10 of Phytophthora capsici.